The chain runs to 212 residues: UPF0502 protein ECA2523 (212 aa).

Belongs to the UPF0502 family.

The sequence is that of UPF0502 protein ECA2523 from Pectobacterium atrosepticum (strain SCRI 1043 / ATCC BAA-672) (Erwinia carotovora subsp. atroseptica).